Here is a 1567-residue protein sequence, read N- to C-terminus: Ice nucleation protein (1567 aa).

A compositionally biased stretch (low complexity) spans 130-185 (PAAEPSAPATQATSATLPTPATPSTQATPSTQSTQSTQSTEATQSTEATPVATVAA). Disordered regions lie at residues 130–195 (PAAE…QQHD), 270–329 (YGST…KGSD), 356–378 (AGSESSLTAGYGSTQTARKGSDV), 449–474 (TQTSGSDSSLTAGYGSTQTARKGSDI), 502–529 (SESSLTAGYGSTQTAQQDSSLTTGYGST), 594–620 (QTAGSDSSLTAGYGSTQTAREGSDVTA), 642–668 (QTSGSDSSLTAGYGSTQTARKGSDVTA), 689–716 (TQTSGSDSSLTAGYGSTQTARKGSDVTA), 738–764 (QTSGSDSSLTAGYGSTQTARKGSDVTA), 785–810 (TQTSGSDSSLTAGYGSTQTARKGSDI), 833–860 (TQTSGSDSSLTAGYGSTQTAREGSDVTA), 929–959 (TQTSGSDSSLTAGYGSTQTARKGSDMTAGYG), and 977–1004 (TQTSGSDSSLTAGYGSTQTAREGSDVTA). The segment covering 270 to 282 (YGSTQTAQEGSRL) has biased composition (polar residues). Residues 283-296 (TSGYGSTATSGSDS) are compositionally biased toward low complexity. 4 stretches are compositionally biased toward polar residues: residues 302–325 (YGSTQTAGSESSLTAGYGSTQTAR), 356–373 (AGSESSLTAGYGSTQTAR), 449–469 (TQTSGSDSSLTAGYGSTQTAR), and 502–519 (SESSLTAGYGSTQTAQQD). The segment covering 520–529 (SSLTTGYGST) has biased composition (low complexity). 8 stretches are compositionally biased toward polar residues: residues 594-613 (QTAGSDSSLTAGYGSTQTAR), 642-661 (QTSGSDSSLTAGYGSTQTAR), 689-709 (TQTSGSDSSLTAGYGSTQTAR), 738-757 (QTSGSDSSLTAGYGSTQTAR), 785-805 (TQTSGSDSSLTAGYGSTQTAR), 833-853 (TQTSGSDSSLTAGYGSTQTAR), 929-949 (TQTSGSDSSLTAGYGSTQTAR), and 977-997 (TQTSGSDSSLTAGYGSTQTAR).

This sequence belongs to the bacterial ice nucleation protein family.

It localises to the cell outer membrane. Functionally, ice nucleation proteins enable bacteria to nucleate crystallization in supercooled water. The sequence is that of Ice nucleation protein (inaX) from Xanthomonas campestris pv. translucens.